The chain runs to 177 residues: Interleukin-1 receptor antagonist protein (177 aa).

The N-terminal stretch at Met-1–Cys-25 is a signal peptide. A disulfide bridge links Cys-91 with Cys-141. Residue Asn-109 is glycosylated (N-linked (GlcNAc...) asparagine).

The protein belongs to the IL-1 family.

It is found in the secreted. Functionally, anti-inflammatory antagonist of interleukin-1 family of proinflammatory cytokines such as interleukin-1beta/IL1B and interleukin-1alpha/IL1A. Protects from immune dysregulation and uncontrolled systemic inflammation triggered by IL1 for a range of innate stimulatory agents such as pathogens. This chain is Interleukin-1 receptor antagonist protein (IL1RN), found in Oryctolagus cuniculus (Rabbit).